A 345-amino-acid chain; its full sequence is uncharacterized protein (345 aa).

This sequence belongs to the methyltransferase superfamily.

This is an uncharacterized protein from Streptomyces fradiae (Streptomyces roseoflavus).